Consider the following 260-residue polypeptide: Acetylglutamate kinase (260 aa).

Residues 46 to 47 (GG), R68, and N160 each bind substrate.

Belongs to the acetylglutamate kinase family. ArgB subfamily.

It is found in the cytoplasm. It carries out the reaction N-acetyl-L-glutamate + ATP = N-acetyl-L-glutamyl 5-phosphate + ADP. The protein operates within amino-acid biosynthesis; L-arginine biosynthesis; N(2)-acetyl-L-ornithine from L-glutamate: step 2/4. Functionally, catalyzes the ATP-dependent phosphorylation of N-acetyl-L-glutamate. The protein is Acetylglutamate kinase of Shewanella denitrificans (strain OS217 / ATCC BAA-1090 / DSM 15013).